The following is a 610-amino-acid chain: UvrABC system protein C (610 aa).

The 79-residue stretch at 16-94 folds into the GIY-YIG domain; it reads SQPGVYRMYD…IKLYQPRYNV (79 aa). The UVR domain occupies 204–239; it reads QQVLTQLITRMEEASQQLHFEDAARIRDQIQAVRRV.

It belongs to the UvrC family. In terms of assembly, interacts with UvrB in an incision complex.

It localises to the cytoplasm. Its function is as follows. The UvrABC repair system catalyzes the recognition and processing of DNA lesions. UvrC both incises the 5' and 3' sides of the lesion. The N-terminal half is responsible for the 3' incision and the C-terminal half is responsible for the 5' incision. This is UvrABC system protein C from Yersinia pseudotuberculosis serotype I (strain IP32953).